The following is a 565-amino-acid chain: FACT complex subunit ctc-1 (565 aa).

Disordered regions lie at residues 151 to 173 (GNDG…ASAG) and 477 to 565 (LGDD…KKTA). A compositionally biased stretch (gly residues) spans 152–165 (NDGGKSNGHSGTGG). 3 stretches are compositionally biased toward acidic residues: residues 478–489 (GDDDMASSDEEA), 500–522 (DEDE…AEEY), and 532–553 (GSEE…DDDE).

This sequence belongs to the SSRP1 family. Forms a stable heterodimer with ctc-2/spt16. The dimer of ctc-1 and ctc-2 weakly associates with multiple molecules of nhp-1/nhp6 to form the FACT complex.

Its subcellular location is the nucleus. The protein localises to the chromosome. Its function is as follows. Component of the FACT complex, a general chromatin factor that acts to reorganize nucleosomes. The FACT complex is involved in multiple processes that require DNA as a template such as mRNA elongation, DNA replication and DNA repair. During transcription elongation the FACT complex acts as a histone chaperone that both destabilizes and restores nucleosomal structure. It facilitates the passage of RNA polymerase II and transcription by promoting the dissociation of one histone H2A-H2B dimer from the nucleosome, then subsequently promotes the reestablishment of the nucleosome following the passage of RNA polymerase II. This chain is FACT complex subunit ctc-1 (ctc-1), found in Neurospora crassa (strain ATCC 24698 / 74-OR23-1A / CBS 708.71 / DSM 1257 / FGSC 987).